The sequence spans 424 residues: ATP-sensitive inward rectifier potassium channel 8 (424 aa).

Over M1–W69 the chain is Cytoplasmic. At S6 the chain carries Phosphoserine. A helical transmembrane segment spans residues R70–V94. At A95 to S126 the chain is on the extracellular side. The segment at residues F127–Q138 is an intramembrane region (helical; Pore-forming). An intramembrane region (pore-forming) is located at residues V139 to G145. The Selectivity filter signature appears at T140–G145. Residues R146 to L154 are Extracellular-facing. The helical transmembrane segment at A155 to C176 threads the bilayer. Residues I177 to S424 are Cytoplasmic-facing. The segment at E373–K409 is disordered. A compositionally biased stretch (low complexity) spans R387–S404.

The protein belongs to the inward rectifier-type potassium channel (TC 1.A.2.1) family. KCNJ8 subfamily. As to quaternary structure, interacts with ABCC9.

Its subcellular location is the membrane. The enzyme catalyses K(+)(in) = K(+)(out). Functionally, inward rectifier potassium channels are characterized by a greater tendency to allow potassium to flow into the cell rather than out of it. Their voltage dependence is regulated by the concentration of extracellular potassium; as external potassium is raised, the voltage range of the channel opening shifts to more positive voltages. The inward rectification is mainly due to the blockage of outward current by internal magnesium. This channel is activated by internal ATP and can be blocked by external barium. Can form a sulfonylurea-sensitive but ATP-insensitive potassium channel with ABCC9. This Mus musculus (Mouse) protein is ATP-sensitive inward rectifier potassium channel 8 (Kcnj8).